Reading from the N-terminus, the 152-residue chain is Deoxyuridine 5'-triphosphate nucleotidohydrolase (152 aa).

Residues 70-72, asparagine 83, 87-89, and lysine 97 contribute to the substrate site; these read RSG and TID.

Belongs to the dUTPase family. The cofactor is Mg(2+).

It catalyses the reaction dUTP + H2O = dUMP + diphosphate + H(+). The protein operates within pyrimidine metabolism; dUMP biosynthesis; dUMP from dCTP (dUTP route): step 2/2. Its function is as follows. This enzyme is involved in nucleotide metabolism: it produces dUMP, the immediate precursor of thymidine nucleotides and it decreases the intracellular concentration of dUTP so that uracil cannot be incorporated into DNA. In Corynebacterium diphtheriae (strain ATCC 700971 / NCTC 13129 / Biotype gravis), this protein is Deoxyuridine 5'-triphosphate nucleotidohydrolase.